A 664-amino-acid polypeptide reads, in one-letter code: L-glutamate oxidase precursor (664 aa).

A signal peptide (tat-type signal) is located at residues 1-44 (MTEDHAVVRSDGGLSRRSFAAVAGTATVATALTSGVAAALPAPA). The FAD site is built by A105, E124, A125, R133, M161, R162, D638, W646, and I647.

It belongs to the flavin monoamine oxidase family. LGOX subfamily. As to quaternary structure, the mature enzyme is a heterohexamer composed of 2 alpha chains, 2 beta chains and 2 gamma chains (alpha2beta2gamma2). It depends on FAD as a cofactor. Post-translationally, predicted to be exported by the Tat system. The position of the signal peptide cleavage has not been experimentally proven. In terms of processing, the precursor form is proteolytically cleaved by an endopeptidase into alpha, beta and gamma chains, which form the stable mature enzyme.

The protein localises to the secreted. It carries out the reaction L-glutamate + O2 + H2O = H2O2 + 2-oxoglutarate + NH4(+). Activity is stimulated in the presence of Mn(2+), Ca(2+) or Mg(2+). Catalyzes the oxidative deamination of L-glutamate to 2-ketoglutarate along with the production of ammonia and hydrogen peroxide. The sequence is that of L-glutamate oxidase precursor from Streptomyces viridosporus (strain ATCC 14672 / DSM 40746 / JCM 4963 / KCTC 9882 / NRRL B-12104 / FH 1290) (Streptomyces ghanaensis).